A 131-amino-acid polypeptide reads, in one-letter code: ATP synthase epsilon chain (131 aa).

The protein belongs to the ATPase epsilon chain family. In terms of assembly, F-type ATPases have 2 components, CF(1) - the catalytic core - and CF(0) - the membrane proton channel. CF(1) has five subunits: alpha(3), beta(3), gamma(1), delta(1), epsilon(1). CF(0) has three main subunits: a, b and c.

Its subcellular location is the cell inner membrane. Functionally, produces ATP from ADP in the presence of a proton gradient across the membrane. The chain is ATP synthase epsilon chain from Helicobacter hepaticus (strain ATCC 51449 / 3B1).